A 97-amino-acid chain; its full sequence is Putative membrane protein insertion efficiency factor (97 aa).

Belongs to the UPF0161 family.

The protein localises to the cell membrane. Could be involved in insertion of integral membrane proteins into the membrane. This chain is Putative membrane protein insertion efficiency factor, found in Lactobacillus helveticus (strain DPC 4571).